The following is a 430-amino-acid chain: Enolase (430 aa).

Gln167 provides a ligand contact to (2R)-2-phosphoglycerate. Glu209 (proton donor) is an active-site residue. Asp246, Glu287, and Asp314 together coordinate Mg(2+). (2R)-2-phosphoglycerate contacts are provided by Lys339, Arg368, Ser369, and Lys390. The active-site Proton acceptor is the Lys339.

Belongs to the enolase family. It depends on Mg(2+) as a cofactor.

The protein resides in the cytoplasm. It is found in the secreted. Its subcellular location is the cell surface. It carries out the reaction (2R)-2-phosphoglycerate = phosphoenolpyruvate + H2O. It participates in carbohydrate degradation; glycolysis; pyruvate from D-glyceraldehyde 3-phosphate: step 4/5. Its function is as follows. Catalyzes the reversible conversion of 2-phosphoglycerate (2-PG) into phosphoenolpyruvate (PEP). It is essential for the degradation of carbohydrates via glycolysis. This is Enolase from Prochlorococcus marinus (strain AS9601).